A 124-amino-acid polypeptide reads, in one-letter code: Small ribosomal subunit protein uS12 (124 aa).

Asp-89 carries the 3-methylthioaspartic acid modification.

Belongs to the universal ribosomal protein uS12 family. Part of the 30S ribosomal subunit. Contacts proteins S8 and S17. May interact with IF1 in the 30S initiation complex.

Functionally, with S4 and S5 plays an important role in translational accuracy. Interacts with and stabilizes bases of the 16S rRNA that are involved in tRNA selection in the A site and with the mRNA backbone. Located at the interface of the 30S and 50S subunits, it traverses the body of the 30S subunit contacting proteins on the other side and probably holding the rRNA structure together. The combined cluster of proteins S8, S12 and S17 appears to hold together the shoulder and platform of the 30S subunit. The polypeptide is Small ribosomal subunit protein uS12 (Erwinia tasmaniensis (strain DSM 17950 / CFBP 7177 / CIP 109463 / NCPPB 4357 / Et1/99)).